The following is a 393-amino-acid chain: NAD(P)H-quinone oxidoreductase subunit H, chloroplastic (393 aa).

This sequence belongs to the complex I 49 kDa subunit family. As to quaternary structure, NDH is composed of at least 16 different subunits, 5 of which are encoded in the nucleus.

The protein resides in the plastid. It localises to the chloroplast thylakoid membrane. The enzyme catalyses a plastoquinone + NADH + (n+1) H(+)(in) = a plastoquinol + NAD(+) + n H(+)(out). It carries out the reaction a plastoquinone + NADPH + (n+1) H(+)(in) = a plastoquinol + NADP(+) + n H(+)(out). NDH shuttles electrons from NAD(P)H:plastoquinone, via FMN and iron-sulfur (Fe-S) centers, to quinones in the photosynthetic chain and possibly in a chloroplast respiratory chain. The immediate electron acceptor for the enzyme in this species is believed to be plastoquinone. Couples the redox reaction to proton translocation, and thus conserves the redox energy in a proton gradient. The polypeptide is NAD(P)H-quinone oxidoreductase subunit H, chloroplastic (Lepidium virginicum (Virginia pepperweed)).